We begin with the raw amino-acid sequence, 612 residues long: Poly(A) RNA polymerase, mitochondrial (612 aa).

The transit peptide at 1–57 (MNSLVRRSAQQLSLWRTYCIKHNASEAASPGRNAGRPNYEEFIGRHQRQAQCSIVVQ) directs the protein to the mitochondrion. Residues 83–89 (YCVRQDE) and 228–229 (GC) contribute to the ATP site. Positions 230 and 232 each coordinate Mg(2+). The region spanning 427–463 (SLSELLLQFFEFYSQFDFHNRAISLNEGKPLSKPDHS) is the PAP-associated domain. Disordered stretches follow at residues 555–574 (AGAT…KSAS) and 588–612 (SELK…RRSR).

Belongs to the DNA polymerase type-B-like family. Requires Mg(2+) as cofactor. Mn(2+) serves as cofactor.

Its subcellular location is the mitochondrion. It carries out the reaction RNA(n) + ATP = RNA(n)-3'-adenine ribonucleotide + diphosphate. Its function is as follows. Polymerase that creates the 3' poly(A) tail of mitochondrial transcripts. This is not required for transcript stability or translation but may maintain mRNA integrity by protecting 3' termini from degradation. The sequence is that of Poly(A) RNA polymerase, mitochondrial from Drosophila melanogaster (Fruit fly).